A 234-amino-acid polypeptide reads, in one-letter code: Ribonuclease 3 (234 aa).

Positions 13 to 136 (YITLEKALGY…LMAGVYLEAG (124 aa)) constitute an RNase III domain. Residue E49 participates in Mg(2+) binding. D53 is a catalytic residue. S122 and E125 together coordinate Mg(2+). The active site involves E125. A DRBM domain is found at 163-232 (DYKTALQELT…AYQALQKLKG (70 aa)).

It belongs to the ribonuclease III family. As to quaternary structure, homodimer. The cofactor is Mg(2+).

Its subcellular location is the cytoplasm. It catalyses the reaction Endonucleolytic cleavage to 5'-phosphomonoester.. Its function is as follows. Digests double-stranded RNA. Involved in the processing of primary rRNA transcript to yield the immediate precursors to the large and small rRNAs (23S and 16S). Processes some mRNAs, and tRNAs when they are encoded in the rRNA operon. Processes pre-crRNA and tracrRNA of type II CRISPR loci if present in the organism. This Helicobacter acinonychis (strain Sheeba) protein is Ribonuclease 3.